A 263-amino-acid polypeptide reads, in one-letter code: Hydroxyethylthiazole kinase (263 aa).

Residue Met41 coordinates substrate. Positions 117 and 163 each coordinate ATP. Position 190 (Ala190) interacts with substrate.

Belongs to the Thz kinase family. Mg(2+) serves as cofactor.

The enzyme catalyses 5-(2-hydroxyethyl)-4-methylthiazole + ATP = 4-methyl-5-(2-phosphooxyethyl)-thiazole + ADP + H(+). Its pathway is cofactor biosynthesis; thiamine diphosphate biosynthesis; 4-methyl-5-(2-phosphoethyl)-thiazole from 5-(2-hydroxyethyl)-4-methylthiazole: step 1/1. In terms of biological role, catalyzes the phosphorylation of the hydroxyl group of 4-methyl-5-beta-hydroxyethylthiazole (THZ). This Haemophilus influenzae (strain PittEE) protein is Hydroxyethylthiazole kinase.